The following is a 195-amino-acid chain: Thymidine kinase (195 aa).

ATP contacts are provided by residues 9 to 16 (STMNAGKS) and 87 to 90 (DEAQ). The Proton acceptor role is filled by E88. Residues C145, C147, C182, and H185 each coordinate Zn(2+).

It belongs to the thymidine kinase family. As to quaternary structure, homotetramer.

The protein localises to the cytoplasm. It catalyses the reaction thymidine + ATP = dTMP + ADP + H(+). In Jannaschia sp. (strain CCS1), this protein is Thymidine kinase.